The following is a 471-amino-acid chain: 5-hydroxytryptamine receptor 2A (471 aa).

Residues 1 to 80 (MEILCEDNTS…LQEKNWSALL (80 aa)) are Extracellular-facing. N-linked (GlcNAc...) asparagine glycosylation is found at asparagine 8, asparagine 38, asparagine 44, asparagine 51, and asparagine 54. Residues 81–97 (TAVVIILTIAGNILVIM) traverse the membrane as a helical segment. The Cytoplasmic segment spans residues 98–111 (AVSLEKKLQNATNY). Residues 112-137 (FLMSLAIADMLLGFLVMPVSMLTILY) form a helical membrane-spanning segment. Residues 138–146 (GYRWPLPSK) are Extracellular-facing. A helical transmembrane segment spans residues 147 to 171 (LCAVWIYLDVLFSTASIMHLCAISL). A disulfide bridge links cysteine 148 with cysteine 227. Position 155 (aspartate 155) interacts with serotonin. The short motif at 172 to 174 (DRY) is the DRY motif; important for ligand-induced conformation changes element. The Cytoplasmic portion of the chain corresponds to 172-191 (DRYVAIQNPIHHSRFNSRTK). Residues 192–215 (AFLKIIAVWTISVGVSMPIPVFGL) traverse the membrane as a helical segment. The Extracellular portion of the chain corresponds to 216 to 232 (QDDSKVFKQGSCLLADD). The chain crosses the membrane as a helical span at residues 233-258 (NFVLIGSFVAFFIPLTIMVITYFLTI). Residues 259–322 (KSLQKEATLC…QSISNEQKAC (64 aa)) are Cytoplasmic-facing. Position 280 is a phosphoserine (serine 280). A helical membrane pass occupies residues 323–348 (KVLGIVFFLFVVMWCPFFITNIMAVI). Asparagine 343 lines the serotonin pocket. A disulfide bridge connects residues cysteine 349 and cysteine 353. The Extracellular portion of the chain corresponds to 349–356 (CKESCNEH). The helical transmembrane segment at 357-382 (VIGALLNVFVWIGYLSSAVNPLVYTL) threads the bilayer. Residues 376–380 (NPLVY) carry the NPxxY motif; important for ligand-induced conformation changes and signaling motif. Topologically, residues 383 to 471 (FNKTYRSAFS…NTVNEKVSCV (89 aa)) are cytoplasmic. Residues 469-471 (SCV) carry the PDZ-binding motif.

The protein belongs to the G-protein coupled receptor 1 family. As to quaternary structure, interacts (via C-terminus) with MPDZ and PATJ. May interact (via C-terminus) with MPP3, PRDX6, DLG4, DLG1, CASK, APBA1 and MAGI2. Interacts with GRM2 and DRD2; this may affect signaling.

It is found in the cell membrane. It localises to the cell projection. The protein localises to the dendrite. Its subcellular location is the axon. The protein resides in the cytoplasmic vesicle. It is found in the membrane. It localises to the caveola. The protein localises to the presynapse. With respect to regulation, G-protein coupled receptor activity is regulated by lipids: oleamide increases HTR2A-mediated activity. Functionally, G-protein coupled receptor for 5-hydroxytryptamine (serotonin). Also functions as a receptor for various drugs and psychoactive substances, including mescaline, psilocybin, 1-(2,5-dimethoxy-4-iodophenyl)-2-aminopropane (DOI) and lysergic acid diethylamide (LSD). Ligand binding causes a conformation change that triggers signaling via guanine nucleotide-binding proteins (G proteins) and modulates the activity of downstream effectors. HTR2A is coupled to G(q)/G(11) G alpha proteins and activates phospholipase C-beta, releasing diacylglycerol (DAG) and inositol 1,4,5-trisphosphate (IP3) second messengers that modulate the activity of phosphatidylinositol 3-kinase and promote the release of Ca(2+) ions from intracellular stores, respectively. Beta-arrestin family members inhibit signaling via G proteins and mediate activation of alternative signaling pathways. Affects neural activity, perception, cognition and mood. Plays a role in the regulation of behavior, including responses to anxiogenic situations and psychoactive substances. Plays a role in intestinal smooth muscle contraction, and may play a role in arterial vasoconstriction. This chain is 5-hydroxytryptamine receptor 2A (HTR2A), found in Cricetulus griseus (Chinese hamster).